We begin with the raw amino-acid sequence, 596 residues long: Probable tripeptidyl-peptidase SED2 (596 aa).

An N-terminal signal peptide occupies residues 1–16 (MRLLKFVCLLASVAAA). Residues 17–203 (KPTPGASHKV…LESMSVEEFA (187 aa)) constitute a propeptide, removed in mature form. The Peptidase S53 domain occupies 210-596 (LVTTACLREL…NFQALTKVLP (387 aa)). A glycan (N-linked (GlcNAc...) asparagine) is linked at Asn-265. Residues Glu-286 and Asp-290 each act as charge relay system in the active site. The N-linked (GlcNAc...) asparagine glycan is linked to Asn-403. Ser-501 serves as the catalytic Charge relay system. Asp-543 and Ile-544 together coordinate Ca(2+). A glycan (N-linked (GlcNAc...) asparagine) is linked at Asn-572. Residues Gly-576 and Asp-578 each coordinate Ca(2+).

The cofactor is Ca(2+).

The protein localises to the secreted. Its subcellular location is the extracellular space. The enzyme catalyses Release of an N-terminal tripeptide from a polypeptide.. Its function is as follows. Secreted tripeptidyl-peptidase which degrades proteins at acidic pHs and is involved in virulence. This chain is Probable tripeptidyl-peptidase SED2 (SED2), found in Arthroderma benhamiae (strain ATCC MYA-4681 / CBS 112371) (Trichophyton mentagrophytes).